Consider the following 295-residue polypeptide: (R)-3-hydroxydecanoyl-ACP:CoA transacylase (295 aa).

Positions 28-254 (NTIILINGSL…VIRDAGHFLD (227 aa)) constitute an AB hydrolase-1 domain.

It participates in polyester biosynthesis; polyhydroxyalkanoate biosynthesis. Functionally, catalyzes the transfer of the acyl moiety from in vitro synthesized 3-hydroxydecanoyl-CoA to acyl carrier protein. This chain is (R)-3-hydroxydecanoyl-ACP:CoA transacylase (phaG), found in Pseudomonas putida (strain ATCC 47054 / DSM 6125 / CFBP 8728 / NCIMB 11950 / KT2440).